The chain runs to 142 residues: Virulence-associated membrane protein 1 (142 aa).

Positions 1 to 20 are cleaved as a signal peptide; it reads MRGILVALTAALIFCSLTPA. The chain crosses the membrane as a helical span at residues 59 to 79; it reads IAIAVGTALVTLVSAGVGGML.

Monomer.

It localises to the membrane. In terms of biological role, during infection, may play a role in establishing and maintaining biotrophy; the formation of a tight interaction zone between the host and the pathogen. This is Virulence-associated membrane protein 1 from Mycosarcoma maydis (Corn smut fungus).